We begin with the raw amino-acid sequence, 320 residues long: Transcription factor bHLH34 (320 aa).

Positions 162–213 constitute a bHLH domain; sequence SKPGTKACREKLRREKLNDKFMDLSSVLEPGRTPKTDKSAILDDAIRVVNQL. The segment at 299–320 is disordered; that stretch reads WSPLPPADRDTSRDLKNLPPVA. The span at 305-314 shows a compositional bias: basic and acidic residues; the sequence is ADRDTSRDLK.

Homodimer. In terms of tissue distribution, expressed constitutively in roots, leaves, stems, and flowers.

The protein resides in the nucleus. The protein is Transcription factor bHLH34 (BHLH34) of Arabidopsis thaliana (Mouse-ear cress).